A 601-amino-acid chain; its full sequence is Ribosomal oxygenase 1 (601 aa).

Residues 1-11 show a composition bias toward basic and acidic residues; that stretch reads MAACGAEERQR. The disordered stretch occupies residues 1 to 149; that stretch reads MAACGAEERQ…PGGGGVPGLL (149 aa). Positions 61–70 are enriched in low complexity; that stretch reads ERAAPPQGAA. The segment covering 73–87 has biased composition (basic and acidic residues); sequence DRVERAGSSEAKQGD. One can recognise a JmjC domain in the interval 254–399; that stretch reads CSLRLLSPQA…DFLEKLLPAA (146 aa). Positions 300, 302, and 365 each coordinate Fe cation.

It belongs to the ROX family. NO66 subfamily. Requires Fe(2+) as cofactor.

The protein localises to the nucleus. It is found in the nucleolus. Its subcellular location is the nucleoplasm. It carries out the reaction N(6),N(6)-dimethyl-L-lysyl(36)-[histone H3] + 2 2-oxoglutarate + 2 O2 = L-lysyl(36)-[histone H3] + 2 formaldehyde + 2 succinate + 2 CO2. The enzyme catalyses N(6)-methyl-L-lysyl-[protein] + 2-oxoglutarate + O2 = L-lysyl-[protein] + formaldehyde + succinate + CO2. The catalysed reaction is L-histidyl-[protein] + 2-oxoglutarate + O2 = (3S)-3-hydroxy-L-histidyl-[protein] + succinate + CO2. Oxygenase that can act as both a histone lysine demethylase and a ribosomal histidine hydroxylase. Specifically demethylates 'Lys-4' (H3K4me) and 'Lys-36' (H3K36me) of histone H3, thereby playing a central role in histone code. Preferentially demethylates trimethylated H3 'Lys-4' (H3K4me3) and monomethylated H3 'Lys-4' (H3K4me1) residues, while it has weaker activity for dimethylated H3 'Lys-36' (H3K36me2). Also catalyzes demethylation of non-histone proteins. Also catalyzes the hydroxylation of 60S ribosomal protein L8 on 'His-216', thereby playing a role in ribosome biogenesis. The protein is Ribosomal oxygenase 1 (RIOX1) of Gallus gallus (Chicken).